Here is a 229-residue protein sequence, read N- to C-terminus: MAKKKAFIPFFYFTSIVFLPWLISLCCNKSLKIWITNWWNTRQCETFLNDIQEKSVLEKFIQLEDLFQLDEMIKEYPETDLQQFRLGIHKETIQFIKIHNEYHIHTILHFSTNLISFVILSGYSFWGKEKLFILNSWVQEFLYNLSDTIKAFSILLLTDLCIGFHSPHGWELMIGYIYKDFGFAHYEQILSGLVSTFPVILDTIFKYWIFRYLNRVSPSLVVIYHAIND.

The next 3 helical transmembrane spans lie at A6–C26, I107–G127, and I189–I209.

Belongs to the CemA family.

It localises to the plastid. The protein localises to the chloroplast inner membrane. The enzyme catalyses K(+)(in) + H(+)(out) = K(+)(out) + H(+)(in). Functionally, contributes to K(+)/H(+) antiport activity by supporting proton efflux to control proton extrusion and homeostasis in chloroplasts in a light-dependent manner to modulate photosynthesis. Prevents excessive induction of non-photochemical quenching (NPQ) under continuous-light conditions. Indirectly promotes efficient inorganic carbon uptake into chloroplasts. In Arabis hirsuta (Hairy rock-cress), this protein is Potassium/proton antiporter CemA.